Consider the following 137-residue polypeptide: Large ribosomal subunit protein uL16 (137 aa).

The interval 1 to 20 is disordered; that stretch reads MLQPSNRKYRKDFKGRNRGV. Residues 7 to 17 are compositionally biased toward basic residues; sequence RKYRKDFKGRN.

This sequence belongs to the universal ribosomal protein uL16 family. As to quaternary structure, part of the 50S ribosomal subunit.

In terms of biological role, binds 23S rRNA and is also seen to make contacts with the A and possibly P site tRNAs. In Coxiella burnetii (strain CbuG_Q212) (Coxiella burnetii (strain Q212)), this protein is Large ribosomal subunit protein uL16.